Consider the following 147-residue polypeptide: D-aminoacyl-tRNA deacylase (147 aa).

Positions 136 to 137 (GP) match the Gly-cisPro motif, important for rejection of L-amino acids motif.

This sequence belongs to the DTD family. Homodimer.

It localises to the cytoplasm. The enzyme catalyses glycyl-tRNA(Ala) + H2O = tRNA(Ala) + glycine + H(+). It catalyses the reaction a D-aminoacyl-tRNA + H2O = a tRNA + a D-alpha-amino acid + H(+). An aminoacyl-tRNA editing enzyme that deacylates mischarged D-aminoacyl-tRNAs. Also deacylates mischarged glycyl-tRNA(Ala), protecting cells against glycine mischarging by AlaRS. Acts via tRNA-based rather than protein-based catalysis; rejects L-amino acids rather than detecting D-amino acids in the active site. By recycling D-aminoacyl-tRNA to D-amino acids and free tRNA molecules, this enzyme counteracts the toxicity associated with the formation of D-aminoacyl-tRNA entities in vivo and helps enforce protein L-homochirality. The sequence is that of D-aminoacyl-tRNA deacylase from Streptococcus equi subsp. equi (strain 4047).